The following is a 539-amino-acid chain: Chaperone Ric-8A (539 aa).

The interval 506–539 (PMGVTSDGRLGPLDEAAQKMLQRQESSDLDSDSD) is disordered.

The protein belongs to the synembryn family.

The protein resides in the cytoplasm. It localises to the cell cortex. Chaperone that specifically binds and folds nascent G alpha proteins prior to G protein heterotrimer formation, promoting their stability and activity: folds GNAI1, GNAO1, GNA13 and GNAQ. Does not fold G(s) G-alpha proteins GNAS nor GNAL. Also acts as a guanine nucleotide exchange factor (GEF) for G alpha proteins by stimulating exchange of bound GDP for free GTP. This is Chaperone Ric-8A (ric8a) from Xenopus laevis (African clawed frog).